Consider the following 349-residue polypeptide: Bifunctional nitrilase/nitrile hydratase NIT4A (349 aa).

Positions 29–301 (VRATVVQAST…EALISADLDL (273 aa)) constitute a CN hydrolase domain. The active-site Proton acceptor is glutamate 69. The active site involves lysine 156. Cysteine 190 serves as the catalytic Nucleophile.

This sequence belongs to the carbon-nitrogen hydrolase superfamily. Nitrilase family. Ubiquitous.

It catalyses the reaction L-asparagine = 3-cyano-L-alanine + H2O. It carries out the reaction 3-cyano-L-alanine + 2 H2O = L-aspartate + NH4(+). In terms of biological role, involved in the cyanide detoxification pathway. Has nitrilase and nitrile-hydratase activity in the ratio 4.0:1, producing both asparagine and aspartic acid from beta-cyano-L-alanine (Ala(CN)). Can also use 3-phenylpropionitrile as substrate, but not indole-3-acetonitrile. In Lupinus angustifolius (Narrow-leaved blue lupine), this protein is Bifunctional nitrilase/nitrile hydratase NIT4A (NIT4A).